A 477-amino-acid chain; its full sequence is tRNA(Ile)-lysidine synthase (477 aa).

36–41 (SGGADS) serves as a coordination point for ATP.

It belongs to the tRNA(Ile)-lysidine synthase family.

It is found in the cytoplasm. It carries out the reaction cytidine(34) in tRNA(Ile2) + L-lysine + ATP = lysidine(34) in tRNA(Ile2) + AMP + diphosphate + H(+). Functionally, ligates lysine onto the cytidine present at position 34 of the AUA codon-specific tRNA(Ile) that contains the anticodon CAU, in an ATP-dependent manner. Cytidine is converted to lysidine, thus changing the amino acid specificity of the tRNA from methionine to isoleucine. This chain is tRNA(Ile)-lysidine synthase, found in Treponema pallidum (strain Nichols).